Reading from the N-terminus, the 516-residue chain is MNVFFMFSLLFLAALGSCAHDRNPLEECFRETDYEEFLEIARNGLTVTSNPKHVVIVGAGMAGLSAAYVLAGAGHQVTVLEASERVGGRVRTYRKKDWYANLGPMRLPTKHRIVREYIRKFGLQLNEFFQENENAWYFIKNIRKRVREVKNNPGILEYPVKPSEEGKSAAQLYVESLRKVVKELKRTNCKYILDKYDTYSTKEYLLKEGNLSPGAVDMIGDLLNEDSGYYVSFIESLKHDDIFGYEKRFDEIVGGMDQLPTSMYEAIKEKVQVHFNARVIEIQQNDRETKVTYQTSANEMSSVTADYVIVCTTSRAARRIKFEPPLPPKKAHALRSVHYRSGTKIFLTCKRKFWEDDGIRGGKSTTDLPSRFIYYPNHNFTSGVGVIIAYGIGDDANFFQALDFKDCADIVINDLSLIHQLPKEDIQTFCRPSMIQRWSLDKYAMGGITTFTPYQFQHFSEALTAPFKRIYFAGEYTAQFHGWIDSTIKSGLTAARDVNRASENPSGIHLSNDNEF.

Positions 1 to 18 (MNVFFMFSLLFLAALGSC) are cleaved as a signal peptide. C28 and C189 are oxidised to a cystine. FAD is bound by residues 61–62 (MA), 81–82 (EA), R89, and 103–106 (GPMR). Substrate is bound by residues R106 and H239. V279 provides a ligand contact to FAD. A disulfide bridge connects residues C349 and C430. N379 carries N-linked (GlcNAc...) asparagine glycosylation. Y390 lines the substrate pocket. FAD-binding positions include E475 and 482-487 (GWIDST). 482–483 (GW) is a substrate binding site.

In terms of assembly, homodimer; non-covalently linked. The cofactor is FAD. N-glycosylated. N-glycan probably consists of the disaccharide N-acetylglucosamine-fucose (HexNAc-Fuc). Expressed by the venom gland.

It is found in the secreted. It carries out the reaction an L-alpha-amino acid + O2 + H2O = a 2-oxocarboxylate + H2O2 + NH4(+). The catalysed reaction is L-leucine + O2 + H2O = 4-methyl-2-oxopentanoate + H2O2 + NH4(+). The enzyme catalyses L-phenylalanine + O2 + H2O = 3-phenylpyruvate + H2O2 + NH4(+). It catalyses the reaction L-tryptophan + O2 + H2O = indole-3-pyruvate + H2O2 + NH4(+). It carries out the reaction L-methionine + O2 + H2O = 4-methylsulfanyl-2-oxobutanoate + H2O2 + NH4(+). The catalysed reaction is L-isoleucine + O2 + H2O = (S)-3-methyl-2-oxopentanoate + H2O2 + NH4(+). The enzyme catalyses L-arginine + O2 + H2O = 5-guanidino-2-oxopentanoate + H2O2 + NH4(+). It catalyses the reaction L-histidine + O2 + H2O = 3-(imidazol-5-yl)pyruvate + H2O2 + NH4(+). Catalyzes an oxidative deamination of predominantly hydrophobic and aromatic L-amino acids, thus producing hydrogen peroxide that may contribute to the diverse toxic effects of this enzyme. Is highly active on L-Met, L-Leu, L-Trp, and L-Phe, moderately active on L-Ile, L-His, and L-Arg, and weakly or not active on L-Gln, L-Val, L-Asn, L-Ala, L-Lys, L-Ser, L-Thr, L-Pro, L-Asp, L-Gly, L-Tyr, L-Cys and L-Glu. This enzyme exhibits diverse biological activities, such as hemorrhage, hemolysis, edema, apoptosis of vascular endothelial cells or tumor cell lines, antibacterial and antiparasitic activities, as well as regulation of platelet aggregation. Its effect on platelets is controversial, since it either induces aggregation or inhibits agonist-induced aggregation. These different effects are probably due to different experimental conditions. In vitro, the enzyme exhibits cytotoxicity against fibroblast cell line and kills Leishmania amazonensis promastigotes, intensified by substrate addition. The sequence is that of L-amino acid oxidase bordonein-L from Crotalus durissus terrificus (South American rattlesnake).